The primary structure comprises 257 residues: Isoprenyl transferase (257 aa).

Residue Asp-37 is part of the active site. Asp-37 is a Mg(2+) binding site. Substrate contacts are provided by residues 38–41, Trp-42, Arg-50, His-54, and 82–84; these read GNGR and STE. Asn-85 functions as the Proton acceptor in the catalytic mechanism. Substrate-binding positions include Trp-86, Arg-88, Arg-205, and 211–213; that span reads RLS. Glu-224 is a Mg(2+) binding site.

It belongs to the UPP synthase family. As to quaternary structure, homodimer. Mg(2+) serves as cofactor.

Its function is as follows. Catalyzes the condensation of isopentenyl diphosphate (IPP) with allylic pyrophosphates generating different type of terpenoids. The polypeptide is Isoprenyl transferase (Shouchella clausii (strain KSM-K16) (Alkalihalobacillus clausii)).